The sequence spans 103 residues: NADH-ubiquinone oxidoreductase chain 4L (103 aa).

Helical transmembrane passes span 6–26, 31–51, and 65–85; these read IFFLLFFSFVIFFLGILGIFI, IIIILVSIELMLLAVNFNFAI, and ILYTLTLAGAEAAIGLAILII.

It belongs to the complex I subunit 4L family.

It localises to the mitochondrion membrane. The enzyme catalyses a ubiquinone + NADH + 5 H(+)(in) = a ubiquinol + NAD(+) + 4 H(+)(out). Core subunit of the mitochondrial membrane respiratory chain NADH dehydrogenase (Complex I) that is believed to belong to the minimal assembly required for catalysis. Complex I functions in the transfer of electrons from NADH to the respiratory chain. The immediate electron acceptor for the enzyme is believed to be ubiquinone. This is NADH-ubiquinone oxidoreductase chain 4L (ND4L) from Acanthamoeba castellanii (Amoeba).